A 629-amino-acid polypeptide reads, in one-letter code: Flap endonuclease GEN-like 1 (629 aa).

Residues 1–87 are N-domain; the sequence is MGVGGSFWDL…DGQPSPLKSQ (87 aa). Positions 2 to 98 are XPG-N domain; sequence GVGGSFWDLL…RAARFFRGSG (97 aa). Mg(2+) contacts are provided by Asp31, Asp78, Glu148, Glu150, Asp169, Asp171, and Asp221. An XPG-I domain region spans residues 136 to 221; sequence EYLGMPVLRA…VAMALLVGSD (86 aa). An I-domain region spans residues 136 to 225; it reads EYLGMPVLRA…LLVGSDHDLH (90 aa). Residues 221 to 421 form a 5'-3' exonuclease domain region; it reads DHDLHGVPGF…MLPMLSTIYL (201 aa). Residues 594 to 617 form a disordered region; that stretch reads KKGLSGDSGKDGSRKSSDVDLSKN. Basic and acidic residues predominate over residues 601–614; it reads SGKDGSRKSSDVDL.

Belongs to the XPG/RAD2 endonuclease family. GEN subfamily. In terms of assembly, monomer. Interacts with PCNA. PCNA stimulates the nuclease activity without altering cleavage specificity. Mg(2+) serves as cofactor. Highly expressed in anthers. Expressed in roots and leaves.

The protein resides in the nucleus. In terms of biological role, endonuclease which cleaves flap structures at the junction between single-stranded DNA and double-stranded DNA. Possesses both single-stranded and double-stranded DNA-binding activities. Involved in early microspore development, but does not alter meiosis or tapetal cells development. Possesses Holliday junction (HJ) resolvase activity in vitro. Cleaves HJ at symmetrically related sites of the branch point. In Oryza sativa subsp. japonica (Rice), this protein is Flap endonuclease GEN-like 1.